The sequence spans 205 residues: tRNA (pseudouridine(54)-N(1))-methyltransferase (205 aa).

Residues L136, G156, 179-184 (LSPLEL), and C189 each bind S-adenosyl-L-methionine.

It belongs to the methyltransferase superfamily. TrmY family. As to quaternary structure, homodimer.

The protein resides in the cytoplasm. It carries out the reaction pseudouridine(54) in tRNA + S-adenosyl-L-methionine = N(1)-methylpseudouridine(54) in tRNA + S-adenosyl-L-homocysteine + H(+). Specifically catalyzes the N1-methylation of pseudouridine at position 54 (Psi54) in tRNAs. The chain is tRNA (pseudouridine(54)-N(1))-methyltransferase from Methanocaldococcus jannaschii (strain ATCC 43067 / DSM 2661 / JAL-1 / JCM 10045 / NBRC 100440) (Methanococcus jannaschii).